The primary structure comprises 464 residues: Alpha-1,6-mannosyl-glycoprotein 4-beta-N-acetylglucosaminyltransferase (464 aa).

The Cytoplasmic portion of the chain corresponds to M1 to T10. The helical; Signal-anchor for type II membrane protein transmembrane segment at A11 to W31 threads the bilayer. Residues Q32–T464 lie on the Lumenal side of the membrane. N70 and N201 each carry an N-linked (GlcNAc...) asparagine glycan.

This sequence belongs to the glycosyltransferase 54 family. The cofactor is a divalent metal cation. Highly expressed in oviduct, spleen, lung and colon.

Its subcellular location is the golgi apparatus membrane. It catalyses the reaction N(4)-{beta-D-GlcNAc-(1-&gt;2)-[beta-D-GlcNAc-(1-&gt;4)]-alpha-D-Man-(1-&gt;3)-[beta-D-GlcNAc-(1-&gt;2)-[beta-D-GlcNAc-(1-&gt;6)]-alpha-D-Man-(1-&gt;6)]-beta-D-Man-(1-&gt;4)-beta-D-GlcNAc-(1-&gt;4)-beta-D-GlcNAc}-L-asparaginyl-[protein] + UDP-N-acetyl-alpha-D-glucosamine = N(4)-{beta-D-GlcNAc-(1-&gt;2)-[beta-D-GlcNAc-(1-&gt;4)]-alpha-D-Man-(1-&gt;3)-[beta-D-GlcNAc-(1-&gt;2)-[beta-D-GlcNAc-(1-&gt;4)]-[beta-D-GlcNAc-(1-&gt;6)]-alpha-D-Man-(1-&gt;6)]-beta-D-Man-(1-&gt;4)-beta-D-GlcNAc-(1-&gt;4)-beta-D-GlcNAc}-L-asparaginyl-[protein] + UDP + H(+). It participates in protein modification; protein glycosylation. Its function is as follows. Glycosyltransferase that catalyzes the transfer of GlcNAc to the Manalpha1-6 arm to form GlcNAcBeta1-4Manalpha1-6 linkage (also named 'GnT-VI' activity). May also participate in the transfer of N-acetylglucosamine (GlcNAc) to the core mannose residues of N-linked glycans by catalyzing the formation of the GlcNAcbeta1-4 branch on the GlcNAcbeta1-2Manalpha1-3 arm of the core structure of N-linked glycans. The polypeptide is Alpha-1,6-mannosyl-glycoprotein 4-beta-N-acetylglucosaminyltransferase (MGAT4C) (Gallus gallus (Chicken)).